The following is a 170-amino-acid chain: CASP-like protein 1F1 (170 aa).

The Cytoplasmic segment spans residues Met1 to Gly16. A helical transmembrane segment spans residues Val17–Ile37. The Extracellular portion of the chain corresponds to Thr38–Tyr62. The chain crosses the membrane as a helical span at residues Leu63 to Leu83. The Cytoplasmic portion of the chain corresponds to Ala84–Arg88. The helical transmembrane segment at Gly89–Phe109 threads the bilayer. Over Ser110–Arg141 the chain is Extracellular. A helical transmembrane segment spans residues Val142–Leu162. Topologically, residues Thr163–Tyr170 are cytoplasmic.

Belongs to the Casparian strip membrane proteins (CASP) family. Homodimer and heterodimers. In terms of tissue distribution, in flowers, expressed in the anther wall.

It is found in the cell membrane. The chain is CASP-like protein 1F1 from Arabidopsis thaliana (Mouse-ear cress).